Consider the following 199-residue polypeptide: Ribosome maturation factor RimP (199 aa).

The tract at residues 165-199 is disordered; the sequence is AGNLPPQPEDDEDMLADFEIDESEDEEDPETGDVQ. The segment covering 172–199 has biased composition (acidic residues); the sequence is PEDDEDMLADFEIDESEDEEDPETGDVQ.

This sequence belongs to the RimP family.

The protein resides in the cytoplasm. Functionally, required for maturation of 30S ribosomal subunits. This chain is Ribosome maturation factor RimP, found in Hyphomonas neptunium (strain ATCC 15444).